The chain runs to 211 residues: 3-demethoxyubiquinol 3-hydroxylase (211 aa).

Positions 60, 90, 93, 142, 174, and 177 each coordinate Fe cation.

Belongs to the COQ7 family. Requires Fe cation as cofactor.

Its subcellular location is the cell membrane. It carries out the reaction a 5-methoxy-2-methyl-3-(all-trans-polyprenyl)benzene-1,4-diol + AH2 + O2 = a 3-demethylubiquinol + A + H2O. It functions in the pathway cofactor biosynthesis; ubiquinone biosynthesis. In terms of biological role, catalyzes the hydroxylation of 2-nonaprenyl-3-methyl-6-methoxy-1,4-benzoquinol during ubiquinone biosynthesis. The chain is 3-demethoxyubiquinol 3-hydroxylase from Francisella tularensis subsp. novicida (strain U112).